We begin with the raw amino-acid sequence, 465 residues long: Ribulose bisphosphate carboxylase large chain (465 aa).

Lysine 4 bears the N6,N6,N6-trimethyllysine mark. The substrate site is built by asparagine 113 and threonine 163. The active-site Proton acceptor is lysine 165. Substrate is bound at residue lysine 167. Mg(2+)-binding residues include lysine 191, aspartate 193, and glutamate 194. The residue at position 191 (lysine 191) is an N6-carboxylysine. The active-site Proton acceptor is histidine 284. Substrate-binding residues include arginine 285, histidine 317, and serine 369.

The protein belongs to the RuBisCO large chain family. Type I subfamily. Heterohexadecamer of 8 large chains and 8 small chains; disulfide-linked. The disulfide link is formed within the large subunit homodimers. It depends on Mg(2+) as a cofactor. In terms of processing, the disulfide bond which can form in the large chain dimeric partners within the hexadecamer appears to be associated with oxidative stress and protein turnover.

The protein resides in the plastid. The protein localises to the chloroplast. The catalysed reaction is 2 (2R)-3-phosphoglycerate + 2 H(+) = D-ribulose 1,5-bisphosphate + CO2 + H2O. The enzyme catalyses D-ribulose 1,5-bisphosphate + O2 = 2-phosphoglycolate + (2R)-3-phosphoglycerate + 2 H(+). Its function is as follows. RuBisCO catalyzes two reactions: the carboxylation of D-ribulose 1,5-bisphosphate, the primary event in carbon dioxide fixation, as well as the oxidative fragmentation of the pentose substrate in the photorespiration process. Both reactions occur simultaneously and in competition at the same active site. This Passiflora quadrangularis (Grenadine) protein is Ribulose bisphosphate carboxylase large chain.